The sequence spans 557 residues: Urocanate hydratase (557 aa).

Residues 53–54 (GG), glutamine 131, 177–179 (GMG), glutamate 197, arginine 202, 243–244 (NA), 264–268 (QTSAH), 274–275 (YL), and tyrosine 323 contribute to the NAD(+) site. Cysteine 411 is a catalytic residue. Glycine 493 contributes to the NAD(+) binding site.

Belongs to the urocanase family. NAD(+) serves as cofactor.

The protein localises to the cytoplasm. It catalyses the reaction 4-imidazolone-5-propanoate = trans-urocanate + H2O. It participates in amino-acid degradation; L-histidine degradation into L-glutamate; N-formimidoyl-L-glutamate from L-histidine: step 2/3. Catalyzes the conversion of urocanate to 4-imidazolone-5-propionate. The protein is Urocanate hydratase of Pseudomonas putida (strain GB-1).